A 325-amino-acid polypeptide reads, in one-letter code: uncharacterized protein (325 aa).

Residues 108–141 (PHRTQGISSTSSKSSKGGKKTPVRSTPKEIKKAT) are disordered.

This is an uncharacterized protein from Homo sapiens (Human).